A 222-amino-acid chain; its full sequence is Sugar fermentation stimulation protein homolog (222 aa).

It belongs to the SfsA family.

The polypeptide is Sugar fermentation stimulation protein homolog (Thermotoga petrophila (strain ATCC BAA-488 / DSM 13995 / JCM 10881 / RKU-1)).